We begin with the raw amino-acid sequence, 347 residues long: NADH-ubiquinone oxidoreductase chain 2 (347 aa).

10 helical membrane passes run Trp-26–Met-46, Phe-60–Leu-80, Ser-96–Pro-116, Ser-123–Tyr-143, Ile-151–Asn-171, Ile-178–Pro-198, Leu-200–Met-220, Met-240–Phe-260, Asp-274–Met-294, and Leu-325–Ile-345.

This sequence belongs to the complex I subunit 2 family. In terms of assembly, core subunit of respiratory chain NADH dehydrogenase (Complex I) which is composed of 45 different subunits. Interacts with TMEM242.

The protein localises to the mitochondrion inner membrane. It catalyses the reaction a ubiquinone + NADH + 5 H(+)(in) = a ubiquinol + NAD(+) + 4 H(+)(out). In terms of biological role, core subunit of the mitochondrial membrane respiratory chain NADH dehydrogenase (Complex I) which catalyzes electron transfer from NADH through the respiratory chain, using ubiquinone as an electron acceptor. Essential for the catalytic activity and assembly of complex I. The sequence is that of NADH-ubiquinone oxidoreductase chain 2 from Dugong dugon (Dugong).